The sequence spans 259 residues: Ras-related protein Rab-34 (259 aa).

Met-1 carries the post-translational modification N-acetylmethionine. GTP is bound by residues Ser-62, Val-63, Gly-64, Lys-65, Thr-66, Asp-78, Tyr-81, and Thr-84. Residue Thr-66 participates in Mg(2+) binding. The Switch 1 signature appears at 71 to 89 (RFCKDTFDKNYKATIGVDF). Residues Thr-84 and Asp-107 each contribute to the Mg(2+) site. The Switch 2 motif lies at 108–127 (TAGQERFKCIASTYYRGAQA). GTP is bound by residues Gly-110, Lys-167, Asp-169, and Ser-198. Ser-241 is subject to Phosphoserine. 2 S-geranylgeranyl cysteine lipidation sites follow: Cys-257 and Cys-258.

The protein belongs to the small GTPase superfamily. Rab family. As to quaternary structure, interacts with RILP. The GTP-bound form interacts with REP15. It depends on Mg(2+) as a cofactor.

The protein resides in the cytoplasm. It localises to the golgi apparatus. Its subcellular location is the cytoplasmic vesicle. The protein localises to the phagosome. It is found in the phagosome membrane. The protein resides in the cell projection. It localises to the cilium. Its subcellular location is the cytoskeleton. The protein localises to the microtubule organizing center. It is found in the centrosome. The protein resides in the centriole. The enzyme catalyses GTP + H2O = GDP + phosphate + H(+). With respect to regulation, regulated by guanine nucleotide exchange factors (GEFs) which promote the exchange of bound GDP for free GTP. Regulated by GTPase activating proteins (GAPs) which increase the GTP hydrolysis activity. Inhibited by GDP dissociation inhibitors (GDIs). Its function is as follows. The small GTPases Rab are key regulators of intracellular membrane trafficking, from the formation of transport vesicles to their fusion with membranes. Rabs cycle between an inactive GDP-bound form and an active GTP-bound form that is able to recruit to membranes different sets of downstream effectors directly responsible for vesicle formation, movement, tethering and fusion. RAB34 transports protein involved in the redistribution of lysosomes to the peri-Golgi region. Plays a role in the maturation of phagosomes that engulf pathogens, such as S.aureus and M.tuberculosis. Plays a role in the fusion of phagosomes with lysosomes. Required for the early steps of intracellular ciliogenesis, the cilium assembly pathway initiated by trafficking and docking of ciliary vesicles to the centrioles in the cytoplasm, followed by axoneme formation in the cytoplasm. After axoneme elongation, the centrioles migrate close to the cell surface so that ciliary vesicles can fuse with the plasma membrane to expose cilia to the extracellular space. It seems dispensable for ciliogenesis via the extracellular pathway where cilium assembly begins after migration and docking of the centriole to the plasma membrane. Also acts as a positive regulator of hedgehog signaling and regulates ciliary function. The protein is Ras-related protein Rab-34 of Mus musculus (Mouse).